The chain runs to 256 residues: Galactitol 2-dehydrogenase (256 aa).

Residues 15–17 (RGI), Asp-36, 59–60 (DV), Asn-86, Tyr-152, and Lys-156 each bind NAD(+). Catalysis depends on Tyr-152, which acts as the Proton acceptor.

It belongs to the short-chain dehydrogenases/reductases (SDR) family.

It catalyses the reaction galactitol + NAD(+) = keto-D-tagatose + NADH + H(+). The enzyme catalyses keto-D-fructose + NADH + H(+) = D-sorbitol + NAD(+). It functions in the pathway carbohydrate metabolism. Functionally, involved in galactitol catabolism. Catalyzes the oxidation of galactitol to D-tagatose. Can also catalyze the oxidation of D-sorbitol to D-fructose. The polypeptide is Galactitol 2-dehydrogenase (Agrobacterium fabrum (strain C58 / ATCC 33970) (Agrobacterium tumefaciens (strain C58))).